Consider the following 127-residue polypeptide: Aspartate 1-decarboxylase (127 aa).

Residue Ser-25 is the Schiff-base intermediate with substrate; via pyruvic acid of the active site. A Pyruvic acid (Ser) modification is found at Ser-25. Position 57 (Thr-57) interacts with substrate. Tyr-58 acts as the Proton donor in catalysis. 73–75 (GAA) is a binding site for substrate.

The protein belongs to the PanD family. As to quaternary structure, heterooctamer of four alpha and four beta subunits. Pyruvate serves as cofactor. Is synthesized initially as an inactive proenzyme, which is activated by self-cleavage at a specific serine bond to produce a beta-subunit with a hydroxyl group at its C-terminus and an alpha-subunit with a pyruvoyl group at its N-terminus.

It localises to the cytoplasm. It carries out the reaction L-aspartate + H(+) = beta-alanine + CO2. It functions in the pathway cofactor biosynthesis; (R)-pantothenate biosynthesis; beta-alanine from L-aspartate: step 1/1. Functionally, catalyzes the pyruvoyl-dependent decarboxylation of aspartate to produce beta-alanine. The chain is Aspartate 1-decarboxylase from Shouchella clausii (strain KSM-K16) (Alkalihalobacillus clausii).